The sequence spans 62 residues: SPbeta prophage-derived uncharacterized protein YonU (62 aa).

Residues 1 to 32 (MEKKFLDAIQQLTKELEMLKKDIDSIKEATVR) are a coiled coil.

The chain is SPbeta prophage-derived uncharacterized protein YonU (yonU) from Bacillus subtilis (strain 168).